Here is a 402-residue protein sequence, read N- to C-terminus: Enoyl-[acyl-carrier-protein] reductase [NADH] (402 aa).

NAD(+) is bound by residues 48–53, 74–75, 111–112, and 140–141; these read GASSGY, FE, DA, and LA. Y226 contributes to the substrate binding site. Y236 serves as the catalytic Proton donor. NAD(+) is bound by residues K245 and 274-276; that span reads VVT.

Belongs to the TER reductase family. In terms of assembly, monomer.

It catalyses the reaction a 2,3-saturated acyl-[ACP] + NAD(+) = a (2E)-enoyl-[ACP] + NADH + H(+). It participates in lipid metabolism; fatty acid biosynthesis. Involved in the final reduction of the elongation cycle of fatty acid synthesis (FAS II). Catalyzes the reduction of a carbon-carbon double bond in an enoyl moiety that is covalently linked to an acyl carrier protein (ACP). The chain is Enoyl-[acyl-carrier-protein] reductase [NADH] from Xanthomonas axonopodis pv. citri (strain 306).